The sequence spans 202 residues: MPIGVPKVPFRSPGEEDAIWVDVYNRLHRERLLFLGQEVDSEISNQLIGLMVYLSIEDDTRDLYLFINSPGGWVIPGIAIYDTMQFVPPDVHTICMGLAASMGSFILVGGEITKRLAFPHARVMIHQPASSFYEAQTGEFILEAEELLKLRETLTRVYVQRTGNPLWVVSEDMERDVFMSATEAQAHGIVDLVAVENSGDFT.

Residue serine 101 is the Nucleophile of the active site. Histidine 126 is an active-site residue.

Belongs to the peptidase S14 family. Component of the chloroplastic Clp protease core complex.

The protein localises to the plastid. It localises to the chloroplast stroma. The enzyme catalyses Hydrolysis of proteins to small peptides in the presence of ATP and magnesium. alpha-casein is the usual test substrate. In the absence of ATP, only oligopeptides shorter than five residues are hydrolyzed (such as succinyl-Leu-Tyr-|-NHMec, and Leu-Tyr-Leu-|-Tyr-Trp, in which cleavage of the -Tyr-|-Leu- and -Tyr-|-Trp bonds also occurs).. Cleaves peptides in various proteins in a process that requires ATP hydrolysis. Has a chymotrypsin-like activity. Plays a major role in the degradation of misfolded proteins. In Platanus occidentalis (Sycamore), this protein is ATP-dependent Clp protease proteolytic subunit.